A 455-amino-acid polypeptide reads, in one-letter code: 2-oxoisovalerate dehydrogenase subunit alpha, mitochondrial (455 aa).

Residues 1-55 (MQGSAKMAMAVAVAVARVWRPSRGLGRTGLPLLRLLGARGLARFHPHRWQQQQHF) constitute a mitochondrion transit peptide. 2 residues coordinate thiamine diphosphate: Tyr-168 and Arg-169. Position 216 (Ser-216) interacts with K(+). Ser-217 contributes to the thiamine diphosphate binding site. K(+)-binding residues include Pro-218, Thr-221, and Gln-222. Glu-248 is a binding site for Mg(2+). Thiamine diphosphate contacts are provided by Gly-249, Ala-250, and Arg-275. Positions 277 and 279 each coordinate Mg(2+). His-346 lines the thiamine diphosphate pocket. Ser-347 is subject to Phosphoserine; by BCKDK. The residue at position 348 (Thr-348) is a Phosphothreonine. Ser-349 and Ser-357 each carry phosphoserine. Position 366 is an N6-acetyllysine; alternate (Lys-366). N6-succinyllysine; alternate is present on Lys-366. Lys-390 bears the N6-succinyllysine mark.

The protein belongs to the BCKDHA family. As to quaternary structure, heterotetramer of 2 alpha/BCKDHA and 2 beta chains/BCKDHB that forms the branched-chain alpha-keto acid decarboxylase (E1) component of the BCKD complex. The branched-chain alpha-ketoacid dehydrogenase is a large complex composed of three major building blocks E1, E2 and E3. It is organized around E2, a 24-meric cubic core composed of DBT, to which are associated 6 to 12 copies of E1, and approximately 6 copies of the dehydrogenase E3, a DLD dimer. Interacts with PPM1K. Thiamine diphosphate is required as a cofactor. It depends on Mg(2+) as a cofactor. Phosphorylated at Ser-347 by BCKDK and dephosphorylated by protein phosphatase PPM1K. As to expression, expressed in kidney (at protein level).

The protein localises to the mitochondrion matrix. The enzyme catalyses N(6)-[(R)-lipoyl]-L-lysyl-[protein] + 3-methyl-2-oxobutanoate + H(+) = N(6)-[(R)-S(8)-2-methylpropanoyldihydrolipoyl]-L-lysyl-[protein] + CO2. Functionally, together with BCKDHB forms the heterotetrameric E1 subunit of the mitochondrial branched-chain alpha-ketoacid dehydrogenase (BCKD) complex. The BCKD complex catalyzes the multi-step oxidative decarboxylation of alpha-ketoacids derived from the branched-chain amino-acids valine, leucine and isoleucine producing CO2 and acyl-CoA which is subsequently utilized to produce energy. The E1 subunit catalyzes the first step with the decarboxylation of the alpha-ketoacid forming an enzyme-product intermediate. A reductive acylation mediated by the lipoylamide cofactor of E2 extracts the acyl group from the E1 active site for the next step of the reaction. This is 2-oxoisovalerate dehydrogenase subunit alpha, mitochondrial (BCKDHA) from Bos taurus (Bovine).